The primary structure comprises 287 residues: Very long chain fatty acid elongase 4 (287 aa).

Transmembrane regions (helical) follow at residues 33–53 (ILVY…EHIM), 64–84 (PFVF…YSCV), and 115–135 (FWVF…VFLV). The HxxHH motif motif lies at 145 to 149 (HWYHH). H148 serves as the catalytic Nucleophile. 4 helical membrane-spanning segments follow: residues 150–170 (LTVA…GLWF), 172–192 (TMNY…ACGM), 199–219 (IAPF…LIVL), and 241–261 (LGLV…GKLY).

Belongs to the ELO family.

It is found in the membrane. The enzyme catalyses a very-long-chain acyl-CoA + malonyl-CoA + H(+) = a very-long-chain 3-oxoacyl-CoA + CO2 + CoA. In terms of biological role, involved in the synthesis of fatty acids. Elongates C16:0 and C18:0 fatty acids to C26:0, with C24:0 being the main product. This chain is Very long chain fatty acid elongase 4, found in Trypanosoma cruzi (strain CL Brener).